The following is a 401-amino-acid chain: L-rhamnonate dehydratase (401 aa).

Residues His-29 and Arg-55 each coordinate substrate. Mg(2+) contacts are provided by Asp-222, Glu-248, and Glu-276. His-325 functions as the Proton acceptor in the catalytic mechanism. Glu-345 is a binding site for substrate.

It belongs to the mandelate racemase/muconate lactonizing enzyme family. RhamD subfamily. In terms of assembly, homooctamer; tetramer of dimers. Mg(2+) serves as cofactor.

It catalyses the reaction L-rhamnonate = 2-dehydro-3-deoxy-L-rhamnonate + H2O. In terms of biological role, catalyzes the dehydration of L-rhamnonate to 2-keto-3-deoxy-L-rhamnonate (KDR). This is L-rhamnonate dehydratase from Klebsiella pneumoniae (strain 342).